A 454-amino-acid chain; its full sequence is UDP-N-acetylmuramate--L-alanine ligase (454 aa).

112-118 (GTHGKTT) contacts ATP.

This sequence belongs to the MurCDEF family.

The protein localises to the cytoplasm. The enzyme catalyses UDP-N-acetyl-alpha-D-muramate + L-alanine + ATP = UDP-N-acetyl-alpha-D-muramoyl-L-alanine + ADP + phosphate + H(+). Its pathway is cell wall biogenesis; peptidoglycan biosynthesis. Its function is as follows. Cell wall formation. The chain is UDP-N-acetylmuramate--L-alanine ligase from Oleidesulfovibrio alaskensis (strain ATCC BAA-1058 / DSM 17464 / G20) (Desulfovibrio alaskensis).